A 204-amino-acid polypeptide reads, in one-letter code: MAGPRRKSPGITPDILLRAYSIGLFPMAESADDPEIFWVEPELRGVLPLDNFHISKSLAKRVRRRPFEIRFDHDFEQVIAACAEETSGRPSTWINQTIRSLYATLFEIGHAHTVEAWDGDELVGGLYGVSLGSAFFGESMFSRRTDASKICLVHLVERLREKGFTLLDTQFTTEHLKTFGAIDVPKAEYALLLAVAMESPHLKF.

This sequence belongs to the L/F-transferase family.

Its subcellular location is the cytoplasm. It carries out the reaction N-terminal L-lysyl-[protein] + L-leucyl-tRNA(Leu) = N-terminal L-leucyl-L-lysyl-[protein] + tRNA(Leu) + H(+). The catalysed reaction is N-terminal L-arginyl-[protein] + L-leucyl-tRNA(Leu) = N-terminal L-leucyl-L-arginyl-[protein] + tRNA(Leu) + H(+). It catalyses the reaction L-phenylalanyl-tRNA(Phe) + an N-terminal L-alpha-aminoacyl-[protein] = an N-terminal L-phenylalanyl-L-alpha-aminoacyl-[protein] + tRNA(Phe). Functionally, functions in the N-end rule pathway of protein degradation where it conjugates Leu, Phe and, less efficiently, Met from aminoacyl-tRNAs to the N-termini of proteins containing an N-terminal arginine or lysine. The polypeptide is Leucyl/phenylalanyl-tRNA--protein transferase (Rhizobium etli (strain ATCC 51251 / DSM 11541 / JCM 21823 / NBRC 15573 / CFN 42)).